Consider the following 121-residue polypeptide: Basic phospholipase A2 (121 aa).

Intrachain disulfides connect C26/C114, C28/C44, C43/C94, C49/C121, C50/C87, C57/C80, and C74/C85. Residues Y27, G29, and G31 each coordinate Ca(2+). H47 is an active-site residue. D48 lines the Ca(2+) pocket. D88 is an active-site residue.

Homopentamer. Ca(2+) is required as a cofactor. As to expression, expressed by the venom gland.

The protein resides in the secreted. It carries out the reaction a 1,2-diacyl-sn-glycero-3-phosphocholine + H2O = a 1-acyl-sn-glycero-3-phosphocholine + a fatty acid + H(+). Functionally, snake venom phospholipase A2 (PLA2) that displays moderate myotoxic activity in vivo, and cytotoxic activity in vitro. In vitro, shows anticoagulant activity on human plasma and in mice causes inflammatory cell infiltration and myonecrosis in the gastrocnemius muscles of CD-1 mice 3 hours after injection (100 ug). PLA2 catalyzes the calcium-dependent hydrolysis of the 2-acyl groups in 3-sn-phosphoglycerides. The sequence is that of Basic phospholipase A2 from Porthidium ophryomegas (Slender hognose viper).